We begin with the raw amino-acid sequence, 430 residues long: Serine--tRNA ligase (430 aa).

Residue 237–239 (TAE) participates in L-serine binding. ATP is bound at residue 268–270 (RRE). Glu291 contributes to the L-serine binding site. 355–358 (EISS) is a binding site for ATP. Ser391 serves as a coordination point for L-serine.

This sequence belongs to the class-II aminoacyl-tRNA synthetase family. Type-1 seryl-tRNA synthetase subfamily. In terms of assembly, homodimer. The tRNA molecule binds across the dimer.

The protein resides in the cytoplasm. The catalysed reaction is tRNA(Ser) + L-serine + ATP = L-seryl-tRNA(Ser) + AMP + diphosphate + H(+). It carries out the reaction tRNA(Sec) + L-serine + ATP = L-seryl-tRNA(Sec) + AMP + diphosphate + H(+). Its pathway is aminoacyl-tRNA biosynthesis; selenocysteinyl-tRNA(Sec) biosynthesis; L-seryl-tRNA(Sec) from L-serine and tRNA(Sec): step 1/1. Functionally, catalyzes the attachment of serine to tRNA(Ser). Is also able to aminoacylate tRNA(Sec) with serine, to form the misacylated tRNA L-seryl-tRNA(Sec), which will be further converted into selenocysteinyl-tRNA(Sec). The protein is Serine--tRNA ligase of Magnetococcus marinus (strain ATCC BAA-1437 / JCM 17883 / MC-1).